A 465-amino-acid polypeptide reads, in one-letter code: Juvenile hormone epoxide hydrolase 2 (465 aa).

The chain crosses the membrane as a helical span at residues 7–27 (ILWIAIVIGLGVLYYEITKEF). Residue aspartate 224 is the Nucleophile of the active site. The active-site Proton donor is tyrosine 370. Histidine 427 serves as the catalytic Proton acceptor.

This sequence belongs to the peptidase S33 family.

The protein resides in the microsome membrane. Its subcellular location is the endoplasmic reticulum membrane. The enzyme catalyses cis-stilbene oxide + H2O = (1R,2R)-hydrobenzoin. It catalyses the reaction 1-(4-methoxyphenyl)-N-methyl-N-[(3-methyloxetan-3-yl)methyl]methanamine + H2O = 2-{[(4-methoxybenzyl)(methyl)amino]methyl}-2-methylpropane-1,3-diol. Its function is as follows. Catalyzes juvenile hormone hydrolysis. In Ctenocephalides felis (Cat flea), this protein is Juvenile hormone epoxide hydrolase 2.